We begin with the raw amino-acid sequence, 240 residues long: Glutamine amidotransferase-like protein chry6 (240 aa).

The Glutamine amidotransferase type-1 domain occupies 13–205; it reads NFILDDTGGR…FVASDNPVLV (193 aa). Residue C102 is the Nucleophile of the active site. Catalysis depends on residues H185 and E187.

The protein belongs to the peptidase C26 family.

The protein operates within pigment biosynthesis. In terms of biological role, glutamine amidotransferase-like protein; part of the gene cluster that mediates the biosynthesis of the yellow pigment chrysogine. Pyruvic acid and anthranilic acid are likely substrates for the nonribosomal peptide synthetase chry1/NRPS14, with pyruvic acid adenylated by the first A domain and anthranilic acid by the second. If pyruvic acid and anthranilic acid are merged and released from chry1/NRPS14 by hydrolysis, a subsequent amidation would lead to 2-pyruvoylaminobenzamide. This process is probably catalyzed by the amidotransferase chry2 using glutamine as amino donor. The dehydrogenase chry5 that has a terminal berberine bridge domain for C-N cyclization could catalyze the cyclization of 2-pyruvoylaminobenzamide to yield acetyl-4(3H)-quinazolidinone. A final reduction of acetyl-4(3H)-quinazolidinone catalyzed by the oxidoreductase chry4 would result in chrysogine. This is Glutamine amidotransferase-like protein chry6 from Gibberella zeae (strain ATCC MYA-4620 / CBS 123657 / FGSC 9075 / NRRL 31084 / PH-1) (Wheat head blight fungus).